The sequence spans 554 residues: (E)-beta-caryophyllene synthase (554 aa).

Aspartate 313 and aspartate 317 together coordinate Mn(2+). Positions 313–317 (DDTYD) match the DDXXD motif motif. Homodimerization regions lie at residues 319–325 (YGTLDEL) and 391–427 (EAQW…LAVI). Mn(2+)-binding residues include aspartate 457 and glutamate 465.

Belongs to the terpene synthase family. As to quaternary structure, homodimer. The cofactor is Mn(2+). It depends on Mg(2+) as a cofactor. As to expression, expressed in peltate glandular trichomes. Present at low levels in flowers, leaves and stems.

It catalyses the reaction (2E,6E)-farnesyl diphosphate = (-)-(E)-beta-caryophyllene + diphosphate. It carries out the reaction (2E,6E)-farnesyl diphosphate = alpha-humulene + diphosphate. It functions in the pathway secondary metabolite biosynthesis; terpenoid biosynthesis. Functionally, involved in the biosynthesis of phenolic sesquiterpenes natural products. Sesquiterpene synthase converting (2E,6E)-farnesyl diphosphate (FPP) to (E)-beta-caryophyllene and alpha-humulene. The protein is (E)-beta-caryophyllene synthase of Origanum vulgare (Wild marjoram).